The following is a 141-amino-acid chain: Hemoglobin subunit alpha (141 aa).

One can recognise a Globin domain in the interval 1-141 (VLSPADKTNV…VSTVLTSKYR (141 aa)). The residue at position 3 (serine 3) is a Phosphoserine. An N6-succinyllysine modification is found at lysine 7. Threonine 8 carries the post-translational modification Phosphothreonine. Lysine 11 is subject to N6-succinyllysine. Lysine 16 carries the post-translational modification N6-acetyllysine; alternate. Lysine 16 carries the post-translational modification N6-succinyllysine; alternate. Tyrosine 24 bears the Phosphotyrosine mark. Position 35 is a phosphoserine (serine 35). The residue at position 40 (lysine 40) is an N6-succinyllysine. At serine 49 the chain carries Phosphoserine. An O2-binding site is contributed by histidine 58. Histidine 87 lines the heme b pocket. Serine 102 bears the Phosphoserine mark. Threonine 108 is subject to Phosphothreonine. Residues serine 124 and serine 131 each carry the phosphoserine modification. 2 positions are modified to phosphothreonine: threonine 134 and threonine 137. Serine 138 bears the Phosphoserine mark.

The protein belongs to the globin family. As to quaternary structure, heterotetramer of two alpha chains and two beta chains. Red blood cells.

In terms of biological role, involved in oxygen transport from the lung to the various peripheral tissues. In Otospermophilus beecheyi (California ground squirrel), this protein is Hemoglobin subunit alpha.